The sequence spans 303 residues: Ribonuclease Z (303 aa).

Positions 61, 63, 65, 66, 139, 207, and 266 each coordinate Zn(2+). The active-site Proton acceptor is the Asp-65.

Belongs to the RNase Z family. Homodimer. Zn(2+) serves as cofactor.

It catalyses the reaction Endonucleolytic cleavage of RNA, removing extra 3' nucleotides from tRNA precursor, generating 3' termini of tRNAs. A 3'-hydroxy group is left at the tRNA terminus and a 5'-phosphoryl group is left at the trailer molecule.. Zinc phosphodiesterase, which displays some tRNA 3'-processing endonuclease activity. Probably involved in tRNA maturation, by removing a 3'-trailer from precursor tRNA. The polypeptide is Ribonuclease Z (Clostridium kluyveri (strain ATCC 8527 / DSM 555 / NBRC 12016 / NCIMB 10680 / K1)).